The sequence spans 368 residues: tRNA-specific 2-thiouridylase MnmA (368 aa).

ATP contacts are provided by residues 6–13 (ALSGGVDS) and Met-32. Catalysis depends on Cys-92, which acts as the Nucleophile. Cysteines 92 and 186 form a disulfide. Position 116 (Gly-116) interacts with ATP. Residues 134-136 (KDQ) are interaction with tRNA. Cys-186 acts as the Cysteine persulfide intermediate in catalysis. The tract at residues 292-293 (RY) is interaction with tRNA.

The protein belongs to the MnmA/TRMU family.

It localises to the cytoplasm. It catalyses the reaction S-sulfanyl-L-cysteinyl-[protein] + uridine(34) in tRNA + AH2 + ATP = 2-thiouridine(34) in tRNA + L-cysteinyl-[protein] + A + AMP + diphosphate + H(+). In terms of biological role, catalyzes the 2-thiolation of uridine at the wobble position (U34) of tRNA, leading to the formation of s(2)U34. The sequence is that of tRNA-specific 2-thiouridylase MnmA from Campylobacter hominis (strain ATCC BAA-381 / DSM 21671 / CCUG 45161 / LMG 19568 / NCTC 13146 / CH001A).